We begin with the raw amino-acid sequence, 416 residues long: MYTLSVSSLNEQIKALLEESFSRVLVEGELSRITFHSSGHIYFTLKDENSTIKAVIFKANAAKLKFQLQEGLKVILDGAITLYKPRGEYQINCFSISPAGHGALALAYEQLKNRLASKGYFESSRKKQLPKFPKRIALITSATGAAVADMLRVAMSRYRAIEIDIYDVLVQGDNAAPSIIRALSLADTKGYDIIVLGRGGGSIEDLWAFNEEIVADAIFSAITPIISAVGHEIDWVISDFVADLRAPTPSAAMEMCLPDEKELYQFIDSLVARYEQMISQKLYGVKQELEHISRLYQDHSIEKKISYKLEEIAQLKLSFTNSIYFKMQSFNKEVESIKIRFPNAIQSRINIVQNQVLTLQKMLESNHPRLKTKKGFAQISKDSKVIDIESLIVDEVFDLMSDRVVISAKVINKKNI.

Belongs to the XseA family. In terms of assembly, heterooligomer composed of large and small subunits.

It localises to the cytoplasm. It carries out the reaction Exonucleolytic cleavage in either 5'- to 3'- or 3'- to 5'-direction to yield nucleoside 5'-phosphates.. Its function is as follows. Bidirectionally degrades single-stranded DNA into large acid-insoluble oligonucleotides, which are then degraded further into small acid-soluble oligonucleotides. The chain is Exodeoxyribonuclease 7 large subunit from Sulfurimonas denitrificans (strain ATCC 33889 / DSM 1251) (Thiomicrospira denitrificans (strain ATCC 33889 / DSM 1251)).